A 478-amino-acid chain; its full sequence is ATP-dependent RNA helicase DDX19A (478 aa).

Alanine 2 carries the N-acetylalanine modification. The segment at 2-299 is N-terminal lobe; sequence ATDSWALAVD…DPNIIKLKRE (298 aa). A Glycyl lysine isopeptide (Lys-Gly) (interchain with G-Cter in SUMO1); alternate cross-link involves residue lysine 26. Residue lysine 26 forms a Glycyl lysine isopeptide (Lys-Gly) (interchain with G-Cter in SUMO2); alternate linkage. The interval 31 to 55 is disordered; sequence KPDTNGVIKTNATPEKTDEEEKEDR. Positions 54-67 are N-terminal helix; the sequence is DRAAQSLLNKLIRS. Residues 91 to 119 carry the Q motif motif; that stretch reads KSFEELRLKPQLLQGVYAMGFNRPSKIQE. Residues glutamine 118 and 137 to 144 contribute to the ATP site; that span reads SQSGTGKT. Residues 124-294 form the Helicase ATP-binding domain; it reads MMLAEPPQNL…QKVVPDPNII (171 aa). The DEAD box motif lies at 241–244; the sequence is DEAD. The tract at residues 300-478 is C-terminal lobe; it reads EETLDTIKQY…DLDEIEKIAN (179 aa). Residues 305 to 473 form the Helicase C-terminal domain; the sequence is TIKQYYVLCN…RLDTDDLDEI (169 aa). ATP-binding residues include arginine 428 and arginine 431.

Belongs to the DEAD box helicase family. DDX19/DBP5 subfamily.

It localises to the cytoplasm. The protein localises to the nucleus. It is found in the nucleoplasm. The catalysed reaction is ATP + H2O = ADP + phosphate + H(+). Its function is as follows. ATP-dependent RNA helicase involved in mRNA export from the nucleus. Rather than unwinding RNA duplexes, DDX19 functions as a remodeler of ribonucleoprotein particles, whereby proteins bound to nuclear mRNA are dissociated and replaced by cytoplasmic mRNA binding proteins. The polypeptide is ATP-dependent RNA helicase DDX19A (DDX19A) (Bos taurus (Bovine)).